The primary structure comprises 508 residues: MTQMSQDEIITNTKTVLQGLEALRVEHVSIMNGIAEVQKDNEKSDMLRKNIENIELGLSEAQVMMALTSHLQNIEAEKHKLKTQVRRLHQENAWLRDELANTQQKFQASEQLVAQLEEEKKHLEFMASVKKYDENQEQDDACDKSRTDPVVELFPDEENEDRHNMSPTPPSQFANQTSGYEIPARLRTLHNLVIQYASQGRYEVAVPLCKQALEDLERTSGHDHPDVATMLNILALVYRDQNKYKEAANLLNDALSIRGKTLGENHPAVAATLNNLAVLYGKRGKYKDAEPLCKRALEIREKVLGKDHPDVAKQLNNLALLCQNQGKYDEVEKYYQRALDIYESKLGPDDPNVAKTKNNLAGCYLKQGRYTEAEILYKQVLTRAHEREFGAIDSKNKPIWQVAEEREEHKFDNRENTPYGEYGGWHKAAKVDSPTVTTTLKNLGALYRRQGMFEAAETLEDCAMRSKKEAYDLAKQTKLSQLLTSNEKRRSKAIKEDLDFSEEKNAKP.

A coiled-coil region spans residues 34–129 (IAEVQKDNEK…KKHLEFMASV (96 aa)). A disordered region spans residues 156-175 (DEENEDRHNMSPTPPSQFAN). Phosphothreonine is present on Thr168. 6 TPR repeats span residues 186–219 (LRTL…LERT), 228–261 (ATML…RGKT), 270–303 (AATL…REKV), 312–345 (AKQL…YESK), 354–387 (AKTK…AHER), and 437–470 (TTTL…KKEA). Residue Thr477 is modified to Phosphothreonine. Phosphoserine is present on residues Ser480 and Ser485. The tract at residues 484–508 (TSNEKRRSKAIKEDLDFSEEKNAKP) is disordered. Residues 493–508 (AIKEDLDFSEEKNAKP) show a composition bias toward basic and acidic residues.

The protein belongs to the kinesin light chain family. Oligomeric complex composed of two heavy chains and two light chains. In terms of tissue distribution, ubiquitous.

It localises to the cytoplasm. It is found in the cytoskeleton. Its function is as follows. Kinesin is a microtubule-associated force-producing protein that may play a role in organelle transport. The light chain may function in coupling of cargo to the heavy chain or in the modulation of its ATPase activity. The protein is Kinesin light chain (Klc) of Drosophila melanogaster (Fruit fly).